The sequence spans 372 residues: Biglycan (372 aa).

The N-terminal stretch at 1–19 (MPTMWPLWLLASLLALSQA) is a signal peptide. Positions 20–40 (LPFEQKGFWDFTLDDGLPMLN) are excised as a propeptide. O-linked (Xyl...) (glycosaminoglycan) serine glycosylation is found at Ser45 and Ser51. Disulfide bonds link Cys67–Cys73 and Cys71–Cys80. LRR repeat units follow at residues 86–106 (KAVP…NNEI), 107–130 (SELR…NNKI), 131–154 (SKIH…KNHL), 155–175 (VEIP…DNRI), 176–199 (RKVP…GNPL), 200–224 (ENSG…EAKL), 225–245 (TGIP…HNKI), 246–269 (QAIE…HNQI), 270–293 (RMIE…NNKL), 294–316 (SRVP…TNNI), 317–346 (TKVG…NNPV), and 347–372 (PYWE…NYKK). Residues Asn274 and Asn315 are each glycosylated (N-linked (GlcNAc...) asparagine). Cysteines 325 and 358 form a disulfide.

This sequence belongs to the small leucine-rich proteoglycan (SLRP) family. SLRP class I subfamily. Homodimer. Forms a ternary complex with MFAP2 and ELN. In terms of processing, the two attached glycosaminoglycan chains can be either chondroitin sulfate or dermatan sulfate.

The protein localises to the secreted. The protein resides in the extracellular space. It localises to the extracellular matrix. Functionally, may be involved in collagen fiber assembly. This Equus caballus (Horse) protein is Biglycan (BGN).